A 304-amino-acid chain; its full sequence is Aspartate carbamoyltransferase catalytic subunit (304 aa).

Residues Arg49 and Thr50 each contribute to the carbamoyl phosphate site. Lys77 is an L-aspartate binding site. Carbamoyl phosphate-binding residues include Arg99, His127, and Gln130. L-aspartate-binding residues include Arg160 and Arg211. Carbamoyl phosphate-binding residues include Ala252 and Pro253.

The protein belongs to the aspartate/ornithine carbamoyltransferase superfamily. ATCase family. As to quaternary structure, heterododecamer (2C3:3R2) of six catalytic PyrB chains organized as two trimers (C3), and six regulatory PyrI chains organized as three dimers (R2).

It catalyses the reaction carbamoyl phosphate + L-aspartate = N-carbamoyl-L-aspartate + phosphate + H(+). The protein operates within pyrimidine metabolism; UMP biosynthesis via de novo pathway; (S)-dihydroorotate from bicarbonate: step 2/3. Its function is as follows. Catalyzes the condensation of carbamoyl phosphate and aspartate to form carbamoyl aspartate and inorganic phosphate, the committed step in the de novo pyrimidine nucleotide biosynthesis pathway. The sequence is that of Aspartate carbamoyltransferase catalytic subunit from Bacillus cereus (strain ATCC 10987 / NRS 248).